We begin with the raw amino-acid sequence, 155 residues long: Ribosomal RNA large subunit methyltransferase H (155 aa).

S-adenosyl-L-methionine-binding positions include leucine 72, glycine 103, and 122–127 (LSPLTL).

The protein belongs to the RNA methyltransferase RlmH family. As to quaternary structure, homodimer.

Its subcellular location is the cytoplasm. The catalysed reaction is pseudouridine(1915) in 23S rRNA + S-adenosyl-L-methionine = N(3)-methylpseudouridine(1915) in 23S rRNA + S-adenosyl-L-homocysteine + H(+). Specifically methylates the pseudouridine at position 1915 (m3Psi1915) in 23S rRNA. In Actinobacillus pleuropneumoniae serotype 3 (strain JL03), this protein is Ribosomal RNA large subunit methyltransferase H.